A 912-amino-acid polypeptide reads, in one-letter code: Putative respiratory burst oxidase homolog protein J (912 aa).

Disordered stretches follow at residues 1–51 (MKNN…GGGI) and 73–112 (WRKS…RTTS). Over 1–323 (MKNNKKVGTE…VVVTAELMYE (323 aa)) the chain is Cytoplasmic. Polar residues-rich tracts occupy residues 29–44 (SVKQ…NPES) and 78–87 (NLGSPSTRKS). EF-hand-like stretches follow at residues 147 to 155 (AVDGRLPKD) and 181 to 193 (RQIK…DKEQ). The region spanning 205 to 240 (DLDCRLQIFFDMCDKDGDGKLTEEEVKEVIVLSASA) is the EF-hand domain. Ca(2+)-binding residues include Asp-218, Asp-220, Asp-222, Lys-224, and Glu-229. Ser-294 bears the Phosphoserine mark. The helical transmembrane segment at 324–344 (HWKKIWVVTLWLAVNVVLFMW) threads the bilayer. At 345 to 363 (KYEEFTTSPLYNITGRCLC) the chain is on the extracellular side. A helical transmembrane segment spans residues 364–384 (AAKGTAEILKLNMALILVPVL). In terms of domain architecture, Ferric oxidoreductase spans 366–523 (KGTAEILKLN…LLVIAYALLI (158 aa)). Residues 385-410 (RRTLTFLRSTFLNHLIPFDDNINFHK) lie on the Cytoplasmic side of the membrane. Residues 411-431 (LIAVAIAVISLLHTALHMLCN) form a helical membrane-spanning segment. At 432–458 (YPRLSSCPYNFYSDYAGNLLGAKQPTY) the chain is on the extracellular side. The helical transmembrane segment at 459 to 479 (LGLMLTPVSVTGVLMIIFMGI) threads the bilayer. The Cytoplasmic segment spans residues 480-510 (SFTLAMHYFRRNIVKLPIPFNRLAGFNSFWY). The chain crosses the membrane as a helical span at residues 511–531 (AHHLLVIAYALLIIHGYILII). The Extracellular portion of the chain corresponds to 532–697 (EKPWYQKTTW…PYGAPAQSYQ (166 aa)). The 134-residue stretch at 562 to 695 (EHNHRVHIIK…KGPYGAPAQS (134 aa)) folds into the FAD-binding FR-type domain. Residues 698–718 (KFDILLLIGLGIGATPFISIL) traverse the membrane as a helical segment. The Cytoplasmic portion of the chain corresponds to 719 to 912 (KDMLNNLKPG…TRFTFHKENF (194 aa)).

This sequence belongs to the RBOH (TC 5.B.1.3) family. As to quaternary structure, monomer and homodimer.

It localises to the membrane. In terms of biological role, calcium-dependent NADPH oxidase that generates superoxide. In Arabidopsis thaliana (Mouse-ear cress), this protein is Putative respiratory burst oxidase homolog protein J (RBOHJ).